Here is a 134-residue protein sequence, read N- to C-terminus: MGYEEQLDRALEETPDIEGTAARFSVPDPDVRQEGNATVYENFQPTIDRLDREESHVMKFLQNELGTSANIDERGRLRLTGEFRQARVEEAINDYVEGYVICPECGLPDTRLEKENGAEVLRCEACGARSPAGN.

The segment covering 1–12 (MGYEEQLDRALE) has biased composition (basic and acidic residues). Positions 1 to 32 (MGYEEQLDRALEETPDIEGTAARFSVPDPDVR) are disordered.

It belongs to the eIF-2-beta/eIF-5 family. As to quaternary structure, heterotrimer composed of an alpha, a beta and a gamma chain.

EIF-2 functions in the early steps of protein synthesis by forming a ternary complex with GTP and initiator tRNA. The protein is Translation initiation factor 2 subunit beta of Natronomonas pharaonis (strain ATCC 35678 / DSM 2160 / CIP 103997 / JCM 8858 / NBRC 14720 / NCIMB 2260 / Gabara) (Halobacterium pharaonis).